The sequence spans 143 residues: Large ribosomal subunit protein uL11 (143 aa).

It belongs to the universal ribosomal protein uL11 family. Part of the ribosomal stalk of the 50S ribosomal subunit. Interacts with L10 and the large rRNA to form the base of the stalk. L10 forms an elongated spine to which L12 dimers bind in a sequential fashion forming a multimeric L10(L12)X complex. One or more lysine residues are methylated.

In terms of biological role, forms part of the ribosomal stalk which helps the ribosome interact with GTP-bound translation factors. The protein is Large ribosomal subunit protein uL11 of Cutibacterium acnes (strain DSM 16379 / KPA171202) (Propionibacterium acnes).